The sequence spans 750 residues: Ribosomal RNA large subunit methyltransferase K/L (750 aa).

Residues 46 to 157 (TAYRLCLWSR…RGEAILSLDL (112 aa)) form the THUMP domain.

The protein belongs to the methyltransferase superfamily. RlmKL family.

It localises to the cytoplasm. The enzyme catalyses guanosine(2445) in 23S rRNA + S-adenosyl-L-methionine = N(2)-methylguanosine(2445) in 23S rRNA + S-adenosyl-L-homocysteine + H(+). It catalyses the reaction guanosine(2069) in 23S rRNA + S-adenosyl-L-methionine = N(2)-methylguanosine(2069) in 23S rRNA + S-adenosyl-L-homocysteine + H(+). Its function is as follows. Specifically methylates the guanine in position 2445 (m2G2445) and the guanine in position 2069 (m7G2069) of 23S rRNA. The sequence is that of Ribosomal RNA large subunit methyltransferase K/L from Pseudomonas savastanoi pv. phaseolicola (strain 1448A / Race 6) (Pseudomonas syringae pv. phaseolicola (strain 1448A / Race 6)).